The primary structure comprises 436 residues: Trigger factor (436 aa).

Residues 163–248 (GDRATIDFEG…VKKIEAAHLP (86 aa)) form the PPIase FKBP-type domain.

Belongs to the FKBP-type PPIase family. Tig subfamily.

The protein resides in the cytoplasm. It catalyses the reaction [protein]-peptidylproline (omega=180) = [protein]-peptidylproline (omega=0). Functionally, involved in protein export. Acts as a chaperone by maintaining the newly synthesized protein in an open conformation. Functions as a peptidyl-prolyl cis-trans isomerase. This Polaromonas sp. (strain JS666 / ATCC BAA-500) protein is Trigger factor.